We begin with the raw amino-acid sequence, 186 residues long: UPF0398 protein BPUM_1952 (186 aa).

This sequence belongs to the UPF0398 family.

The chain is UPF0398 protein BPUM_1952 from Bacillus pumilus (strain SAFR-032).